Reading from the N-terminus, the 225-residue chain is F-box protein SKIP27 (225 aa).

Positions 121-169 (KSRLECLPQDLLIRVICGVDHEDLKSLKLVSKSIREASLVAKTLHFAYT) constitute an F-box domain.

Part of a SCF (ASK-cullin-F-box) protein ligase complex. Interacts with SKP1A/ASK1 and SPK1B/ASK2.

The protein resides in the nucleus. Its pathway is protein modification; protein ubiquitination. In terms of biological role, component of SCF(ASK-cullin-F-box) E3 ubiquitin ligase complexes, which may mediate the ubiquitination and subsequent proteasomal degradation of target proteins. This is F-box protein SKIP27 (SKIP27) from Arabidopsis thaliana (Mouse-ear cress).